A 327-amino-acid polypeptide reads, in one-letter code: MNKLTFHNNKVMQDRRRVCIFLPNDKSVSIIINVKILCHQLLVQVCDLLRLKDSHLFGLSVIQNNEHVYMELSQKLYKYCPKEWKKEASKGIDQFGPPMIIHFRVQYYVENGKLISDRIARYYYYWHLRKQVLHSQCVLREEAYFLLAAFALQADLGNFKRKVHHGDYFEPEAYFPAWVVSKRGKDYILKHIPNMHRDQFALTASEAYLKYIKEAVRLDDVAIHYYRLYKDKREVEGSLTLGLTMRGIQIFQNLEEEKQLLYDFPWTNVGKLVFVGKKFEILPDGLPSARKLVYYTGCPTRSRHLLQLLSNSHRLYMNLQPVLRHLR.

In terms of domain architecture, FERM spans 16–320 (RRVCIFLPND…NSHRLYMNLQ (305 aa)).

The protein resides in the cytoplasm. It localises to the cell membrane. This is FERM domain-containing protein 6 (Frmd6) from Rattus norvegicus (Rat).